Here is a 208-residue protein sequence, read N- to C-terminus: Protein Nef (208 aa).

Residues 1 to 33 form a disordered region; that stretch reads MGGKWSKRMSGWSAVRERMKRAEPAEPAADGVG. Residue glycine 2 is the site of N-myristoyl glycine; by host attachment. At serine 6 the chain carries Phosphoserine; by host. Basic and acidic residues predominate over residues 15–24; it reads VRERMKRAEP. The tract at residues 64-67 is acidic; interacts with host PACS1 and PACS2; stabilizes the interaction of NEF/MHC-I with host AP1M1; necessary for MHC-I internalization; that stretch reads EDED. The SH3-binding; interaction with Src family tyrosine kinases stretch occupies residues 71–80; it reads PVRPQVPLRP. The PxxP; stabilizes the interaction of NEF/MHC-I with host AP1M1; necessary for MHC-I internalization motif lies at 74–77; the sequence is PQVP. The segment at 110–126 is mediates dimerization, Nef-PTE1 interaction; the sequence is DILDLWIHHTQGYFPDW. The tract at residues 150-182 is binding to ATP6V1H; that stretch reads VDPDYVEEANAGENNSLLHPMSQHGMDDPEKEV. The Dileucine internalization motif; necessary for CD4 internalization signature appears at 166 to 167; the sequence is LL. The Diacidic; necessary for CD4 internalization signature appears at 176–177; it reads DD.

The protein belongs to the lentivirus primate group Nef protein family. In terms of assembly, monomer; cytosolic form. Homodimer; membrane bound form. Interacts with Nef associated p21-activated kinase (PAK2); this interaction activates PAK2. Associates with the Nef-MHC-I-AP1 complex; this complex is required for MHC-I internalization. Interacts (via C-terminus) with host PI3-kinase. Interacts with host PACS1; this interaction seems to be weak. Interacts with host PACS2. Interacts with host LCK and MAPK3; these interactions inhibit the kinase activity of the latter. Interacts with host ATP6V1H; this interaction may play a role in CD4 endocytosis. Associates with the CD4-Nef-AP2 complex; this complex is required for CD4 internalization. Interacts with host AP2 subunit alpha and AP2 subunit sigma2. Interacts with TCR-zeta chain; this interaction up-regulates the Fas ligand (FasL) surface expression. Interacts with host HCK, LYN, and SRC; these interactions activate the Src family kinases. Interacts with MAP3K5; this interaction inhibits the Fas and TNFR-mediated death signals. Interacts with beta-COP and PTE1. Interacts with human RACK1; this increases Nef phosphorylation by PKC. Interacts with TP53; this interaction decreases the half-life of TP53, protecting the infected cell against p53-mediated apoptosis. The virion-associated Nef proteins are cleaved by the viral protease to release the soluble C-terminal core protein. Nef is probably cleaved concomitantly with viral structural proteins on maturation of virus particles. Post-translationally, myristoylated. In terms of processing, phosphorylated on serine residues, probably by host PKCdelta and theta.

It is found in the host cell membrane. It localises to the virion. The protein localises to the secreted. Its subcellular location is the host Golgi apparatus membrane. Functionally, factor of infectivity and pathogenicity, required for optimal virus replication. Alters numerous pathways of T-lymphocyte function and down-regulates immunity surface molecules in order to evade host defense and increase viral infectivity. Alters the functionality of other immunity cells, like dendritic cells, monocytes/macrophages and NK cells. In terms of biological role, in infected CD4(+) T-lymphocytes, down-regulates the surface MHC-I, mature MHC-II, CD4, CD28, CCR5 and CXCR4 molecules. Mediates internalization and degradation of host CD4 through the interaction of with the cytoplasmic tail of CD4, the recruitment of AP-2 (clathrin adapter protein complex 2), internalization through clathrin coated pits, and subsequent transport to endosomes and lysosomes for degradation. Diverts host MHC-I molecules to the trans-Golgi network-associated endosomal compartments by an endocytic pathway to finally target them for degradation. MHC-I down-regulation may involve AP-1 (clathrin adapter protein complex 1) or possibly Src family kinase-ZAP70/Syk-PI3K cascade recruited by PACS2. In consequence infected cells are masked for immune recognition by cytotoxic T-lymphocytes. Decreasing the number of immune receptors also prevents reinfection by more HIV particles (superinfection). Down-regulates host SERINC3 and SERINC5 thereby excluding these proteins from the viral particles. Virion infectivity is drastically higher when SERINC3 or SERINC5 are excluded from the viral envelope, because these host antiviral proteins impair the membrane fusion event necessary for subsequent virion penetration. Bypasses host T-cell signaling by inducing a transcriptional program nearly identical to that of anti-CD3 cell activation. Interaction with TCR-zeta chain up-regulates the Fas ligand (FasL). Increasing surface FasL molecules and decreasing surface MHC-I molecules on infected CD4(+) cells send attacking cytotoxic CD8+ T-lymphocytes into apoptosis. Its function is as follows. Plays a role in optimizing the host cell environment for viral replication without causing cell death by apoptosis. Protects the infected cells from apoptosis in order to keep them alive until the next virus generation is ready to strike. Inhibits the Fas and TNFR-mediated death signals by blocking MAP3K5/ASK1. Decreases the half-life of TP53, protecting the infected cell against p53-mediated apoptosis. Inhibits the apoptotic signals regulated by the Bcl-2 family proteins through the formation of a Nef/PI3-kinase/PAK2 complex that leads to activation of PAK2 and induces phosphorylation of host BAD. Functionally, extracellular Nef protein targets CD4(+) T-lymphocytes for apoptosis by interacting with CXCR4 surface receptors. The chain is Protein Nef from Human immunodeficiency virus type 1 group M subtype B (isolate SF162) (HIV-1).